Consider the following 207-residue polypeptide: GTP-binding protein RHO1 (207 aa).

18–25 (GDGACGKT) lines the GTP pocket. The Effector region signature appears at 40–48 (YVPTVFDNY). Residues 65 to 69 (DTAGQ) and 123 to 126 (CKAD) contribute to the GTP site. The segment at 187-207 (GKQGKSKAKSDKKKKKKCVVL) is disordered. The segment covering 190–207 (GKSKAKSDKKKKKKCVVL) has biased composition (basic residues). Position 204 is a cysteine methyl ester (Cys-204). Cys-204 carries S-geranylgeranyl cysteine lipidation. Positions 205 to 207 (VVL) are cleaved as a propeptide — removed in mature form.

This sequence belongs to the small GTPase superfamily. Rho family.

The protein localises to the cell membrane. In terms of biological role, involved in the regulation of actin polarization. Rho proteins are required for distinct steps during polarized hyphal growth of A.gossypii. This is GTP-binding protein RHO1 (RHO1) from Eremothecium gossypii (strain ATCC 10895 / CBS 109.51 / FGSC 9923 / NRRL Y-1056) (Yeast).